A 1002-amino-acid chain; its full sequence is Ephrin type-B receptor 5 (1002 aa).

The signal sequence occupies residues 1–29; the sequence is MDSNADISARRVSGMDWLWLVCFFHLVTS. The Extracellular segment spans residues 30–564; the sequence is LEEILLDTTG…AQDRLPLIVG (535 aa). Residues 31–213 enclose the Eph LBD domain; the sequence is EEILLDTTGE…FFYKCPAVVK (183 aa). Fibronectin type-III domains lie at 344–452 and 453–548; these read APRD…TSQS and VPSA…TLMA. An N-linked (GlcNAc...) asparagine glycan is attached at asparagine 446. A helical membrane pass occupies residues 565 to 585; it reads SALGGLAFLVIAAIAILAIIF. Topologically, residues 586–1002 are cytoplasmic; that stretch reads KSKRRETPYT…HLNQLEPVEV (417 aa). The Protein kinase domain occupies 637 to 900; the sequence is IKIEEVIGSG…QIVSALDKMI (264 aa). ATP-binding positions include 643 to 651 and lysine 669; that span reads IGSGEFGEV. Aspartate 762 (proton acceptor) is an active-site residue. The segment at 906–928 is disordered; that stretch reads LKATGTGSSRPSQPLLSNSPPDF. Positions 910 to 928 are enriched in polar residues; it reads GTGSSRPSQPLLSNSPPDF. One can recognise an SAM domain in the interval 929–993; sequence PSLSNAHEWL…LNSIQLMKVH (65 aa). Residues 1000–1002 carry the PDZ-binding motif; the sequence is VEV.

The protein belongs to the protein kinase superfamily. Tyr protein kinase family. Ephrin receptor subfamily. Most abundant in thymus and detectable in brain, retina, kidney, lung and heart. Not detected in skeletal muscle and liver.

The protein resides in the membrane. It catalyses the reaction L-tyrosyl-[protein] + ATP = O-phospho-L-tyrosyl-[protein] + ADP + H(+). Functionally, receptor for members of the ephrin-B family. The protein is Ephrin type-B receptor 5 (EPHB5) of Gallus gallus (Chicken).